A 209-amino-acid polypeptide reads, in one-letter code: Large ribosomal subunit protein uL3 (209 aa).

The segment at 128–166 (FGGGSRTHGQSDRLRAPGSVGGSSDPSRTFKGTRMAGRM) is disordered.

Belongs to the universal ribosomal protein uL3 family. Part of the 50S ribosomal subunit. Forms a cluster with proteins L14 and L19.

In terms of biological role, one of the primary rRNA binding proteins, it binds directly near the 3'-end of the 23S rRNA, where it nucleates assembly of the 50S subunit. This is Large ribosomal subunit protein uL3 from Chlorobaculum parvum (strain DSM 263 / NCIMB 8327) (Chlorobium vibrioforme subsp. thiosulfatophilum).